The sequence spans 299 residues: Oxygen-dependent coproporphyrinogen-III oxidase (299 aa).

S92 contributes to the substrate binding site. Residues H96 and H106 each coordinate a divalent metal cation. The Proton donor role is filled by H106. 108 to 110 (NVR) contributes to the substrate binding site. 2 residues coordinate a divalent metal cation: H145 and H175. Positions 240-275 (YVEFNLVWDRGTLFGLQTGGRTESILMSMPPLVRWE) are important for dimerization. Residue 258 to 260 (GGR) coordinates substrate.

Belongs to the aerobic coproporphyrinogen-III oxidase family. In terms of assembly, homodimer. A divalent metal cation serves as cofactor.

It is found in the cytoplasm. The enzyme catalyses coproporphyrinogen III + O2 + 2 H(+) = protoporphyrinogen IX + 2 CO2 + 2 H2O. The protein operates within porphyrin-containing compound metabolism; protoporphyrin-IX biosynthesis; protoporphyrinogen-IX from coproporphyrinogen-III (O2 route): step 1/1. Functionally, involved in the heme biosynthesis. Catalyzes the aerobic oxidative decarboxylation of propionate groups of rings A and B of coproporphyrinogen-III to yield the vinyl groups in protoporphyrinogen-IX. The sequence is that of Oxygen-dependent coproporphyrinogen-III oxidase from Klebsiella pneumoniae subsp. pneumoniae (strain ATCC 700721 / MGH 78578).